Reading from the N-terminus, the 442-residue chain is Histidine--tRNA ligase (442 aa).

The protein belongs to the class-II aminoacyl-tRNA synthetase family. Homodimer.

Its subcellular location is the cytoplasm. The enzyme catalyses tRNA(His) + L-histidine + ATP = L-histidyl-tRNA(His) + AMP + diphosphate + H(+). In Helicobacter pylori (strain ATCC 700392 / 26695) (Campylobacter pylori), this protein is Histidine--tRNA ligase (hisS).